A 201-amino-acid polypeptide reads, in one-letter code: FMN-dependent NADH:quinone oxidoreductase (201 aa).

FMN is bound at residue 92–95 (MWNL).

It belongs to the azoreductase type 1 family. As to quaternary structure, homodimer. FMN serves as cofactor.

The catalysed reaction is 2 a quinone + NADH + H(+) = 2 a 1,4-benzosemiquinone + NAD(+). It carries out the reaction N,N-dimethyl-1,4-phenylenediamine + anthranilate + 2 NAD(+) = 2-(4-dimethylaminophenyl)diazenylbenzoate + 2 NADH + 2 H(+). In terms of biological role, quinone reductase that provides resistance to thiol-specific stress caused by electrophilic quinones. Functionally, also exhibits azoreductase activity. Catalyzes the reductive cleavage of the azo bond in aromatic azo compounds to the corresponding amines. This Caldicellulosiruptor saccharolyticus (strain ATCC 43494 / DSM 8903 / Tp8T 6331) protein is FMN-dependent NADH:quinone oxidoreductase.